Consider the following 165-residue polypeptide: Cell division protein SepF (165 aa).

The interval 23–75 (DEYGDYAGDYETQETAPVATRSSKRESRPAPVSDLSERRRPASGPTGVVAELS) is disordered.

Belongs to the SepF family. As to quaternary structure, homodimer. Interacts with FtsZ.

It is found in the cytoplasm. In terms of biological role, cell division protein that is part of the divisome complex and is recruited early to the Z-ring. Probably stimulates Z-ring formation, perhaps through the cross-linking of FtsZ protofilaments. Its function overlaps with FtsA. The protein is Cell division protein SepF of Nocardioides sp. (strain ATCC BAA-499 / JS614).